A 217-amino-acid polypeptide reads, in one-letter code: MSNPFLKQVFNKDKTFRPKRKFEPGTQRFELHKRAQASLNAGLDLRLAVQLPPGEDLNDWVAVHVVDFFNRINLIYGTISDGCTEQSCPVMSGGPKYEYRWQDEQRFRKPTALSAPRYMDLLMDWIEVQINNEDIFPTNVGTPFPKTFLQAVRKILSRLFRVFVHVYIHHFDRIAQMGSEAHVNTCYKHFYYFVTEFNLIDPKELEPLKEMTSRMCH.

Zn(2+) contacts are provided by Cys83, Cys88, His165, and His170.

The protein belongs to the MOB1/phocein family.

May regulate the activity of kinases. This Mus musculus (Mouse) protein is MOB kinase activator 3A (Mob3a).